A 286-amino-acid polypeptide reads, in one-letter code: Putative type II secretion system L-type protein YghE (286 aa).

Residues 136–156 form a helical membrane-spanning segment; the sequence is VMILPILLILVALAVERGVTL.

This sequence belongs to the GSP L family.

Its subcellular location is the cell inner membrane. Involved in a type II secretion system (T2SS, formerly general secretion pathway, GSP) for the export of folded proteins across the outer membrane. The chain is Putative type II secretion system L-type protein YghE from Escherichia coli (strain K12).